The primary structure comprises 130 residues: Small ribosomal subunit protein uS11 (130 aa).

The protein belongs to the universal ribosomal protein uS11 family. Part of the 30S ribosomal subunit. Interacts with proteins S7 and S18. Binds to IF-3.

Its function is as follows. Located on the platform of the 30S subunit, it bridges several disparate RNA helices of the 16S rRNA. Forms part of the Shine-Dalgarno cleft in the 70S ribosome. In Nautilia profundicola (strain ATCC BAA-1463 / DSM 18972 / AmH), this protein is Small ribosomal subunit protein uS11.